Consider the following 118-residue polypeptide: Large ribosomal subunit protein bL20 (118 aa).

Belongs to the bacterial ribosomal protein bL20 family.

Binds directly to 23S ribosomal RNA and is necessary for the in vitro assembly process of the 50S ribosomal subunit. It is not involved in the protein synthesizing functions of that subunit. This is Large ribosomal subunit protein bL20 from Caldicellulosiruptor saccharolyticus (strain ATCC 43494 / DSM 8903 / Tp8T 6331).